The chain runs to 377 residues: Circumsporozoite protein (377 aa).

The signal sequence occupies residues methionine 1–cysteine 22. A disordered region spans residues histidine 51–glutamate 294. The span at aspartate 72–aspartate 100 shows a compositional bias: basic and acidic residues. The required for the binding to heparan sulfate proteoglycans (HSPGs) on the surface of host hepatocytes stretch occupies residues lysine 80–arginine 88. The tract at residues lysine 91 to proline 95 is region I; contains the proteolytic cleavage site. A run of 20 repeats spans residues proline 95–proline 103, alanine 104–proline 112, alanine 113–proline 121, alanine 122–proline 130, alanine 131–proline 139, alanine 140–proline 148, alanine 149–proline 157, alanine 158–proline 166, alanine 167–proline 175, alanine 176–proline 184, alanine 185–proline 193, alanine 194–proline 202, alanine 203–proline 211, alanine 212–proline 220, alanine 221–proline 229, alanine 230–proline 238, alanine 239–proline 247, alanine 248–proline 256, alanine 257–alanine 265, and alanine 266–alanine 274. Positions proline 95 to alanine 274 are 20 X 9 AA tandem repeats of [PA]-G-D-R-A-[DA]-G-Q-[PA]. A compositionally biased stretch (low complexity) spans glycine 236–glutamine 273. The segment covering alanine 274–glycine 283 has biased composition (gly residues). The span at glutamine 284 to asparagine 293 shows a compositional bias: low complexity. In terms of domain architecture, TSP type-1 spans lysine 303–alanine 355. 2 disulfide bridges follow: cysteine 315/cysteine 349 and cysteine 319/cysteine 354. Threonine 318 is a glycosylation site (O-linked (Fuc) threonine). A lipid anchor (GPI-anchor amidated cysteine) is attached at cysteine 354. Residues alanine 355–asparagine 377 constitute a propeptide, removed in mature form.

This sequence belongs to the plasmodium circumsporozoite protein family. Post-translationally, during host cell invasion, proteolytically cleaved at the cell membrane in the region I by a papain-like cysteine protease of parasite origin. Cleavage is triggered by the sporozoite contact with highly sulfated heparan sulfate proteoglycans (HSPGs) present on the host hepatocyte cell surface. Cleavage exposes the TSP type-1 (TSR) domain and is required for productive invasion of host hepatocytes but not for adhesion to the host cell membrane. Cleavage is dispensable for sporozoite development in the oocyst, motility and for traversal of host and vector cells. In terms of processing, O-glycosylated; maybe by POFUT2.

Its subcellular location is the cell membrane. The protein resides in the cytoplasm. Its function is as follows. Essential sporozoite protein. In the mosquito vector, required for sporozoite development in the oocyst, migration through the vector hemolymph and entry into the vector salivary glands. In the vertebrate host, required for sporozoite migration through the host dermis and infection of host hepatocytes. Binds to highly sulfated heparan sulfate proteoglycans (HSPGs) on the surface of host hepatocytes. In the vertebrate host, binds to highly sulfated heparan sulfate proteoglycans (HSPGs) on the surface of host hepatocytes and is required for sporozoite invasion of the host hepatocytes. The chain is Circumsporozoite protein from Plasmodium vivax (strain Salvador I).